A 653-amino-acid polypeptide reads, in one-letter code: Zinc finger protein 59 (653 aa).

The region spanning V14–P86 is the KRAB domain. C2H2-type zinc fingers lie at residues Y172–H194, Y200–H222, F256–H278, Y284–H306, F312–H334, F340–H362, F368–H390, L396–H418, F424–H446, Y452–H474, F480–H502, F508–H530, F536–H558, Y564–H586, F592–H614, and F620–H642.

The protein belongs to the krueppel C2H2-type zinc-finger protein family. In terms of tissue distribution, expressed predominantly in the testis (at protein level).

Its subcellular location is the nucleus. In terms of biological role, may have a role during differentiation processes. In Mus musculus (Mouse), this protein is Zinc finger protein 59 (Zfp59).